The primary structure comprises 301 residues: Oxygen-dependent coproporphyrinogen-III oxidase (301 aa).

Ser90 contributes to the substrate binding site. A divalent metal cation-binding residues include His94 and His104. His104 (proton donor) is an active-site residue. 106–108 provides a ligand contact to substrate; sequence NVR. A divalent metal cation contacts are provided by His143 and His173. The important for dimerization stretch occupies residues 238 to 273; that stretch reads YVEFNLVWDRGTLFGLQSGGRTESILMSLPPVVKWR. 256–258 contributes to the substrate binding site; sequence GGR.

Belongs to the aerobic coproporphyrinogen-III oxidase family. Homodimer. The cofactor is a divalent metal cation.

Its subcellular location is the cytoplasm. The catalysed reaction is coproporphyrinogen III + O2 + 2 H(+) = protoporphyrinogen IX + 2 CO2 + 2 H2O. The protein operates within porphyrin-containing compound metabolism; protoporphyrin-IX biosynthesis; protoporphyrinogen-IX from coproporphyrinogen-III (O2 route): step 1/1. Involved in the heme biosynthesis. Catalyzes the aerobic oxidative decarboxylation of propionate groups of rings A and B of coproporphyrinogen-III to yield the vinyl groups in protoporphyrinogen-IX. In Nitrosomonas europaea (strain ATCC 19718 / CIP 103999 / KCTC 2705 / NBRC 14298), this protein is Oxygen-dependent coproporphyrinogen-III oxidase.